The following is a 595-amino-acid chain: Proline--tRNA ligase (595 aa).

The protein belongs to the class-II aminoacyl-tRNA synthetase family. ProS type 1 subfamily. Homodimer.

Its subcellular location is the cytoplasm. The catalysed reaction is tRNA(Pro) + L-proline + ATP = L-prolyl-tRNA(Pro) + AMP + diphosphate. Functionally, catalyzes the attachment of proline to tRNA(Pro) in a two-step reaction: proline is first activated by ATP to form Pro-AMP and then transferred to the acceptor end of tRNA(Pro). As ProRS can inadvertently accommodate and process non-cognate amino acids such as alanine and cysteine, to avoid such errors it has two additional distinct editing activities against alanine. One activity is designated as 'pretransfer' editing and involves the tRNA(Pro)-independent hydrolysis of activated Ala-AMP. The other activity is designated 'posttransfer' editing and involves deacylation of mischarged Ala-tRNA(Pro). The misacylated Cys-tRNA(Pro) is not edited by ProRS. In Treponema denticola (strain ATCC 35405 / DSM 14222 / CIP 103919 / JCM 8153 / KCTC 15104), this protein is Proline--tRNA ligase.